The sequence spans 250 residues: 1-(5-phosphoribosyl)-5-[(5-phosphoribosylamino)methylideneamino] imidazole-4-carboxamide isomerase (250 aa).

Asp-8 serves as the catalytic Proton acceptor. The active-site Proton donor is the Asp-129.

This sequence belongs to the HisA/HisF family.

It localises to the cytoplasm. It carries out the reaction 1-(5-phospho-beta-D-ribosyl)-5-[(5-phospho-beta-D-ribosylamino)methylideneamino]imidazole-4-carboxamide = 5-[(5-phospho-1-deoxy-D-ribulos-1-ylimino)methylamino]-1-(5-phospho-beta-D-ribosyl)imidazole-4-carboxamide. The protein operates within amino-acid biosynthesis; L-histidine biosynthesis; L-histidine from 5-phospho-alpha-D-ribose 1-diphosphate: step 4/9. This is 1-(5-phosphoribosyl)-5-[(5-phosphoribosylamino)methylideneamino] imidazole-4-carboxamide isomerase from Desulfovibrio desulfuricans (strain ATCC 27774 / DSM 6949 / MB).